Consider the following 479-residue polypeptide: Signal recognition particle subunit SRP54 1 (479 aa).

The segment at 1 to 295 is G-domain; the sequence is MVLAELGGRI…DVKPFVSRLL (295 aa). GTP-binding positions include 108 to 115, 190 to 194, and 248 to 251; these read GLQGAGKT, DTSGR, and TKMD. The interval 296 to 479 is M-domain; it reads GKGDWSGLVD…MMGMFGGGGK (184 aa).

It belongs to the GTP-binding SRP family. SRP54 subfamily. Component of a signal recognition particle (SRP) complex that consists of a 7SL RNA molecule of 300 nucleotides and six protein subunits: SRP72, SRP68, SRP54, SRP19, SRP14 and SRP9.

It localises to the cytoplasm. The protein localises to the endoplasmic reticulum. It catalyses the reaction GTP + H2O = GDP + phosphate + H(+). Component of the signal recognition particle (SRP) complex, a ribonucleoprotein complex that mediates the cotranslational targeting of secretory and membrane proteins to the endoplasmic reticulum (ER). As part of the SRP complex, associates with the SRP receptor (SR) component SRPRA to target secretory proteins to the endoplasmic reticulum membrane. Binds to the signal sequence of presecretory proteins when they emerge from the ribosomes. Displays basal GTPase activity, and stimulates reciprocal GTPase activation of the SR subunit SRPRA. Forms a guanosine 5'-triphosphate (GTP)-dependent complex with the SR subunit SRPRA. SR compaction and GTPase mediated rearrangement of SR drive SRP-mediated cotranslational protein translocation into the ER. Requires the presence of SRP9/SRP14 and/or SRP19 to stably interact with RNA. The polypeptide is Signal recognition particle subunit SRP54 1 (SRP-54A) (Arabidopsis thaliana (Mouse-ear cress)).